Here is a 356-residue protein sequence, read N- to C-terminus: Tyrosine recombinase XerS (356 aa).

Residues Thr-16–Thr-121 enclose the Core-binding (CB) domain. Residues Glu-169 to Asn-354 form the Tyr recombinase domain. Active-site residues include Arg-210, Lys-234, His-306, Arg-309, and His-332. Tyr-341 (O-(3'-phospho-DNA)-tyrosine intermediate) is an active-site residue.

The protein belongs to the 'phage' integrase family. XerS subfamily.

It is found in the cytoplasm. With respect to regulation, ftsK is required for recombination. Site-specific tyrosine recombinase, which acts by catalyzing the cutting and rejoining of the recombining DNA molecules. Essential to convert dimers of the bacterial chromosome into monomers to permit their segregation at cell division. The polypeptide is Tyrosine recombinase XerS (Streptococcus gordonii (strain Challis / ATCC 35105 / BCRC 15272 / CH1 / DL1 / V288)).